Here is a 47-residue protein sequence, read N- to C-terminus: Large ribosomal subunit protein eL40 (47 aa).

Belongs to the eukaryotic ribosomal protein eL40 family.

This is Large ribosomal subunit protein eL40 from Methanocaldococcus jannaschii (strain ATCC 43067 / DSM 2661 / JAL-1 / JCM 10045 / NBRC 100440) (Methanococcus jannaschii).